A 438-amino-acid polypeptide reads, in one-letter code: Phosphatidylserine decarboxylase proenzyme 1, mitochondrial (438 aa).

The N-terminal 21 residues, 1–21, are a transit peptide targeting the mitochondrion; it reads MRRFRVWPPSPSPWPLLASRP. The Mitochondrial matrix portion of the chain corresponds to 22 to 48; the sequence is CPHSHHHRSPFHASANSGARQGNFILP. The chain crosses the membrane as a helical span at residues 49–67; the sequence is GATAATLVMFGILHARRMY. Over 68–438 the chain is Mitochondrial intermembrane; that stretch reads EDQKVVERKE…EAIGRWTSRE (371 aa). Catalysis depends on charge relay system; for autoendoproteolytic cleavage activity residues Asp-173, His-273, and Ser-387. Ser-387 functions as the Schiff-base intermediate with substrate; via pyruvic acid; for decarboxylase activity in the catalytic mechanism. Ser-387 is subject to Pyruvic acid (Ser); by autocatalysis.

Belongs to the phosphatidylserine decarboxylase family. PSD-B subfamily. Eukaryotic type I sub-subfamily. As to quaternary structure, heterodimer of a large membrane-associated beta subunit and a small pyruvoyl-containing alpha subunit. Pyruvate serves as cofactor. Post-translationally, is synthesized initially as an inactive proenzyme. Formation of the active enzyme involves a self-maturation process in which the active site pyruvoyl group is generated from an internal serine residue via an autocatalytic post-translational modification. Two non-identical subunits are generated from the proenzyme in this reaction, and the pyruvate is formed at the N-terminus of the alpha chain, which is derived from the carboxyl end of the proenzyme. The autoendoproteolytic cleavage occurs by a canonical serine protease mechanism, in which the side chain hydroxyl group of the serine supplies its oxygen atom to form the C-terminus of the beta chain, while the remainder of the serine residue undergoes an oxidative deamination to produce ammonia and the pyruvoyl prosthetic group on the alpha chain. During this reaction, the Ser that is part of the protease active site of the proenzyme becomes the pyruvoyl prosthetic group, which constitutes an essential element of the active site of the mature decarboxylase.

The protein localises to the mitochondrion inner membrane. The enzyme catalyses a 1,2-diacyl-sn-glycero-3-phospho-L-serine + H(+) = a 1,2-diacyl-sn-glycero-3-phosphoethanolamine + CO2. Its pathway is phospholipid metabolism; phosphatidylethanolamine biosynthesis; phosphatidylethanolamine from CDP-diacylglycerol: step 2/2. Catalyzes the formation of phosphatidylethanolamine (PtdEtn) from phosphatidylserine (PtdSer). Plays a central role in phospholipid metabolism and in the interorganelle trafficking of phosphatidylserine. The polypeptide is Phosphatidylserine decarboxylase proenzyme 1, mitochondrial (PSD1) (Oryza sativa subsp. japonica (Rice)).